The chain runs to 395 residues: Synaptotagmin-8 (395 aa).

The Extracellular segment spans residues 1-44 (MQADRSMKMGHVSNPLSTSAPVDATAGPNLIPDLITKIPWPRWI). A helical; Signal-anchor for type III membrane protein membrane pass occupies residues 45–65 (LFIAILAAGVLLVSCLLCVIC). Topologically, residues 66-395 (YCCHRQRHRK…PRLPLLRPRS (330 aa)) are cytoplasmic. C2 domains follow at residues 113–229 (PWGQ…ESWY) and 241–370 (QMGE…AQWH).

It belongs to the synaptotagmin family. Homodimer or homooligomer. Homodimerization and homooligomerization do not depend on Ca(2+). Interacts with SYNCRIP isoform 2 C-terminus. Binds inositol 1,3,4,5-tetrakisphosphate (IP4). Binds to AP2 in a Ca(2+)-independent manner. Interacts with STX1A, STX1B and STX2; the interaction is Ca(2+)-dependent. As to expression, ubiquitous. Strongly expressed in heart, kidney, cerebral cortex, pancreas, and many insulin-secreting cells; lower expression in spleen. Broadly distributed in kidney.

The protein localises to the cell membrane. It is found in the cytoplasmic vesicle. Its subcellular location is the secretory vesicle. It localises to the acrosome. In terms of biological role, involved in the trafficking and exocytosis of secretory vesicles in non-neuronal tissues. Mediates Ca(2+)-regulation of exocytosis acrosomal reaction in sperm. May mediate Ca(2+)-regulation of exocytosis in insulin secreted cells. The chain is Synaptotagmin-8 (Syt8) from Rattus norvegicus (Rat).